Consider the following 76-residue polypeptide: MSSSQFFILCIILISSFPLHECENGKSVEASNAAKTLCMSVNCDNKDRNLTCACCLAKSKNRCYSSKSECVADCKD.

An N-terminal signal peptide occupies residues 1–22; that stretch reads MSSSQFFILCIILISSFPLHEC. Disulfide bonds link cysteine 38/cysteine 54, cysteine 43/cysteine 74, cysteine 52/cysteine 70, and cysteine 55/cysteine 63.

Belongs to the MEG family. In terms of tissue distribution, expressed in flowers.

This chain is EMBRYO SURROUNDING FACTOR 1-like protein 8 (ESFL8), found in Arabidopsis thaliana (Mouse-ear cress).